Reading from the N-terminus, the 307-residue chain is Methionyl-tRNA formyltransferase (307 aa).

108–111 (SLLP) contacts (6S)-5,6,7,8-tetrahydrofolate.

The protein belongs to the Fmt family.

The enzyme catalyses L-methionyl-tRNA(fMet) + (6R)-10-formyltetrahydrofolate = N-formyl-L-methionyl-tRNA(fMet) + (6S)-5,6,7,8-tetrahydrofolate + H(+). In terms of biological role, attaches a formyl group to the free amino group of methionyl-tRNA(fMet). The formyl group appears to play a dual role in the initiator identity of N-formylmethionyl-tRNA by promoting its recognition by IF2 and preventing the misappropriation of this tRNA by the elongation apparatus. This is Methionyl-tRNA formyltransferase from Xylella fastidiosa (strain M12).